Here is a 184-residue protein sequence, read N- to C-terminus: MADETKATDAGQRYAQSLFELTIENGSLQKVEADLKSLKAMVADSADLRRLIASPAFSAEDKGKGLTAVAKKAGFQPLTTKFLGLVAANGRTGDLLGAISAFVELSAKHRGVVTAEVVSAAALSPAQLKGVQTALAQALGKTPEVSTRVDPSLLGGLKVRVGSRLFDASLRSKLDSLKFALKRA.

It belongs to the ATPase delta chain family. As to quaternary structure, F-type ATPases have 2 components, F(1) - the catalytic core - and F(0) - the membrane proton channel. F(1) has five subunits: alpha(3), beta(3), gamma(1), delta(1), epsilon(1). F(0) has three main subunits: a(1), b(2) and c(10-14). The alpha and beta chains form an alternating ring which encloses part of the gamma chain. F(1) is attached to F(0) by a central stalk formed by the gamma and epsilon chains, while a peripheral stalk is formed by the delta and b chains.

Its subcellular location is the cell inner membrane. In terms of biological role, f(1)F(0) ATP synthase produces ATP from ADP in the presence of a proton or sodium gradient. F-type ATPases consist of two structural domains, F(1) containing the extramembraneous catalytic core and F(0) containing the membrane proton channel, linked together by a central stalk and a peripheral stalk. During catalysis, ATP synthesis in the catalytic domain of F(1) is coupled via a rotary mechanism of the central stalk subunits to proton translocation. This protein is part of the stalk that links CF(0) to CF(1). It either transmits conformational changes from CF(0) to CF(1) or is implicated in proton conduction. In Caulobacter vibrioides (strain NA1000 / CB15N) (Caulobacter crescentus), this protein is ATP synthase subunit delta.